The chain runs to 513 residues: NADH-quinone oxidoreductase chain 13 (513 aa).

A run of 14 helical transmembrane segments spans residues 3-23 (NLLS…ALFL), 34-54 (AKWL…FVLF), 81-101 (VDGI…LTIL), 112-132 (EYMI…TALD), 133-153 (LVLF…IIGI), 164-184 (FKFF…MIAM), 211-231 (MTVV…SFAV), 250-270 (PTAG…YGFL), 277-297 (FPVA…IAIV), 312-332 (VIAY…FAAN), 340-360 (IFQM…VGVI), 383-403 (AAVF…SGFV), 418-438 (WVAL…LWLY), and 463-483 (WVFI…RLVT).

This sequence belongs to the complex I subunit 4 family. NDH-1 is composed of at least 14 different subunits, Nqo1 to Nqo14. The complex has a L-shaped structure, with the hydrophobic arm (subunits Nqo7, Nqo8, Nqo10 to Nqo14) embedded in the inner membrane and the hydrophilic peripheral arm (subunits Nqo1 to Nqo6, Nqo9) protruding into the bacterial cytoplasm. The hydrophilic domain contains all the redox centers.

It is found in the cell inner membrane. It catalyses the reaction a quinone + NADH + 5 H(+)(in) = a quinol + NAD(+) + 4 H(+)(out). In terms of biological role, NDH-1 shuttles electrons from NADH, via FMN and iron-sulfur (Fe-S) centers, to quinones in the respiratory chain. The immediate electron acceptor for the enzyme in this species is believed to be ubiquinone. Couples the redox reaction to proton translocation (for every two electrons transferred, four hydrogen ions are translocated across the cytoplasmic membrane), and thus conserves the redox energy in a proton gradient. This chain is NADH-quinone oxidoreductase chain 13, found in Paracoccus denitrificans.